Here is an 894-residue protein sequence, read N- to C-terminus: Myb-like protein K (894 aa).

A compositionally biased stretch (low complexity) spans 93 to 139 (LQQQQQSPVTNVATNTPPTLQHSISSPSPNNFNNNNNANNQFLSPNS). 4 disordered regions span residues 93-221 (LQQQ…SASS), 299-353 (QVGN…QPIT), 492-539 (QQQQ…LEMI), and 601-659 (AATT…HWTS). Residues 140 to 149 (PQVAKSSPSQ) show a composition bias toward polar residues. Residues 150–221 (NNPSTPIANT…SQSLNSSASS (72 aa)) show a composition bias toward low complexity. The span at 300–309 (VGNPMQQSND) shows a compositional bias: polar residues. Composition is skewed to low complexity over residues 310 to 353 (MQPQ…QPIT) and 492 to 527 (QQQQ…PQQM). Basic and acidic residues-rich tracts occupy residues 611–640 (GKEE…SKKD) and 649–659 (ASKEKTSHWTS). In terms of domain architecture, HTH myb-type spans 649–704 (ASKEKTSHWTSEEHNKFLEAVQQFGIKDYHAIAKFVQTRNHHQVRTHVNTYLKNQK). The segment at residues 677–700 (YHAIAKFVQTRNHHQVRTHVNTYL) is a DNA-binding region (H-T-H motif). Residues 703–852 (QKKAEAATSS…EYNSGFDSNS (150 aa)) are disordered. Composition is skewed to low complexity over residues 710–742 (TSST…QPPI), 751–805 (QQQQ…QQPQ), and 815–845 (PPNN…NEYN).

Its subcellular location is the nucleus. This Dictyostelium discoideum (Social amoeba) protein is Myb-like protein K (mybK).